The sequence spans 66 residues: MPKMKTHKGAAKRFKKTGSGKLKRSHAFTSHLFANKSQKQKRKLRKSAIVHSGDFKRIREMLTYKK.

Basic residues-rich tracts occupy residues Met1–His26 and Gln38–Ala48. A disordered region spans residues Met1–Ala48.

This sequence belongs to the bacterial ribosomal protein bL35 family.

This is Large ribosomal subunit protein bL35 from Halalkalibacterium halodurans (strain ATCC BAA-125 / DSM 18197 / FERM 7344 / JCM 9153 / C-125) (Bacillus halodurans).